Reading from the N-terminus, the 187-residue chain is PRA1 family protein G1 (187 aa).

A run of 3 helical transmembrane segments spans residues 84 to 104, 125 to 145, and 146 to 166; these read LFLIGDPMALVTVASFVAMWL, VIVFGLILGSLWALWFINSLQ, and CLILGVVTSVLLCLVHAIIRN.

This sequence belongs to the PRA1 family. In terms of tissue distribution, expressed in roots and lateral roots.

The protein resides in the endosome membrane. Functionally, may be involved in both secretory and endocytic intracellular trafficking in the endosomal/prevacuolar compartments. The chain is PRA1 family protein G1 (PRA1G1) from Arabidopsis thaliana (Mouse-ear cress).